Reading from the N-terminus, the 279-residue chain is Thymidylate synthase (279 aa).

DUMP is bound at residue 132–133; it reads RR. C153 serves as the catalytic Nucleophile. DUMP-binding positions include 178-181, N189, and 219-221; these read RSND and HIY. A (6R)-5,10-methylene-5,6,7,8-tetrahydrofolate-binding site is contributed by D181. A278 is a binding site for (6R)-5,10-methylene-5,6,7,8-tetrahydrofolate.

This sequence belongs to the thymidylate synthase family. Bacterial-type ThyA subfamily. Homodimer.

The protein localises to the cytoplasm. It catalyses the reaction dUMP + (6R)-5,10-methylene-5,6,7,8-tetrahydrofolate = 7,8-dihydrofolate + dTMP. It functions in the pathway pyrimidine metabolism; dTTP biosynthesis. Catalyzes the reductive methylation of 2'-deoxyuridine-5'-monophosphate (dUMP) to 2'-deoxythymidine-5'-monophosphate (dTMP) while utilizing 5,10-methylenetetrahydrofolate (mTHF) as the methyl donor and reductant in the reaction, yielding dihydrofolate (DHF) as a by-product. This enzymatic reaction provides an intracellular de novo source of dTMP, an essential precursor for DNA biosynthesis. The protein is Thymidylate synthase of Lactococcus lactis subsp. cremoris (strain SK11).